Here is a 228-residue protein sequence, read N- to C-terminus: UPF0502 protein Rfer_1648 (228 aa).

Belongs to the UPF0502 family.

In Albidiferax ferrireducens (strain ATCC BAA-621 / DSM 15236 / T118) (Rhodoferax ferrireducens), this protein is UPF0502 protein Rfer_1648.